The sequence spans 220 residues: Ribonuclease HII (220 aa).

Positions lysine 32–cysteine 220 constitute an RNase H type-2 domain. Residues aspartate 38, glutamate 39, and aspartate 130 each contribute to the a divalent metal cation site.

Belongs to the RNase HII family. Mn(2+) is required as a cofactor. It depends on Mg(2+) as a cofactor.

Its subcellular location is the cytoplasm. It carries out the reaction Endonucleolytic cleavage to 5'-phosphomonoester.. Functionally, endonuclease that specifically degrades the RNA of RNA-DNA hybrids. This chain is Ribonuclease HII, found in Brucella canis (strain ATCC 23365 / NCTC 10854 / RM-666).